Consider the following 472-residue polypeptide: Cysteine--tRNA ligase (472 aa).

Cys27 is a Zn(2+) binding site. Positions 29–39 match the 'HIGH' region motif; it reads PTVYNLIHIGN. Zn(2+) contacts are provided by Cys214, His239, and Glu243. The 'KMSKS' region signature appears at 271–275; sequence KMSKS. Lys274 is a binding site for ATP.

This sequence belongs to the class-I aminoacyl-tRNA synthetase family. In terms of assembly, monomer. It depends on Zn(2+) as a cofactor.

It is found in the cytoplasm. It carries out the reaction tRNA(Cys) + L-cysteine + ATP = L-cysteinyl-tRNA(Cys) + AMP + diphosphate. This is Cysteine--tRNA ligase from Lachnospira eligens (strain ATCC 27750 / DSM 3376 / VPI C15-48 / C15-B4) (Eubacterium eligens).